The following is a 142-amino-acid chain: Small ribosomal subunit protein uS12 (142 aa).

The protein belongs to the universal ribosomal protein uS12 family. Part of the 30S ribosomal subunit.

In terms of biological role, with S4 and S5 plays an important role in translational accuracy. Located at the interface of the 30S and 50S subunits. The protein is Small ribosomal subunit protein uS12 of Thermoplasma volcanium (strain ATCC 51530 / DSM 4299 / JCM 9571 / NBRC 15438 / GSS1).